The chain runs to 35 residues: Mu-theraphotoxin-Hhn1a (35 aa).

3 disulfides stabilise this stretch: Cys-2/Cys-17, Cys-9/Cys-24, and Cys-16/Cys-31.

The protein belongs to the neurotoxin 10 (Hwtx-1) family. 22 (Htx-4) subfamily. As to quaternary structure, monomer. Expressed by the venom gland.

The protein localises to the secreted. Inhibits selectively tetrodotoxin-sensitive voltage-gated sodium channels (Nav). Does not act by binding to receptor site 3 to slow the inactivation kinetics of sodium currents. The protein is Mu-theraphotoxin-Hhn1a of Cyriopagopus hainanus (Chinese bird spider).